We begin with the raw amino-acid sequence, 310 residues long: Glutaminase 1 (310 aa).

Substrate contacts are provided by Ser66, Asn117, Glu161, Asn168, Tyr192, Tyr244, and Val262. Residue Lys294 is modified to N6-acetyllysine.

This sequence belongs to the glutaminase family. As to quaternary structure, homotetramer.

It carries out the reaction L-glutamine + H2O = L-glutamate + NH4(+). This chain is Glutaminase 1, found in Shigella flexneri.